A 527-amino-acid chain; its full sequence is Zinc finger protein 35 (527 aa).

Residues 9-221 (MALAPWGPVK…NPKTQLGQKP (213 aa)) are globular domain. Residues 16–38 (PVKVKKEEEEEENFPGQASSQQV) form a disordered region. Residues Lys-20, Lys-21, Lys-99, Lys-117, Lys-125, Lys-144, Lys-158, Lys-189, and Lys-214 each participate in a glycyl lysine isopeptide (Lys-Gly) (interchain with G-Cter in SUMO2) cross-link. C2H2-type zinc fingers lie at residues 222–244 (FTCS…QRIH) and 250–272 (FECH…QRIH). Lys-276 is covalently cross-linked (Glycyl lysine isopeptide (Lys-Gly) (interchain with G-Cter in SUMO2)). 9 C2H2-type zinc fingers span residues 278-300 (YVCS…QKIH), 306-328 (FKCN…QKVH), 334-356 (YECN…QRIH), 362-384 (FACN…QRSH), 390-412 (YECK…QRIH), 418-440 (YDCS…QRIH), 446-468 (YVCN…QRIH), 474-496 (YTCN…QRTH), and 502-524 (YECE…HRTH).

The protein belongs to the krueppel C2H2-type zinc-finger protein family.

It is found in the nucleus. Functionally, may be involved in transcriptional regulation. Involved in cell differentiation and/or proliferation. This chain is Zinc finger protein 35 (ZNF35), found in Homo sapiens (Human).